Consider the following 235-residue polypeptide: Large ribosomal subunit protein uL1 (235 aa).

It belongs to the universal ribosomal protein uL1 family. Part of the 50S ribosomal subunit.

In terms of biological role, binds directly to 23S rRNA. The L1 stalk is quite mobile in the ribosome, and is involved in E site tRNA release. Protein L1 is also a translational repressor protein, it controls the translation of the L11 operon by binding to its mRNA. This is Large ribosomal subunit protein uL1 from Methylibium petroleiphilum (strain ATCC BAA-1232 / LMG 22953 / PM1).